The chain runs to 277 residues: Probable enoyl-CoA hydratase, mitochondrial (277 aa).

The transit peptide at 1 to 42 (MLKQVIKTVSSSQAPKKYFFKQFCTSTTEKKGRVGLVTLNRP) directs the protein to the mitochondrion. Substrate-binding positions include 85–88 (ADIK) and Gly-128.

The protein belongs to the enoyl-CoA hydratase/isomerase family. In terms of assembly, homohexamer; dimer of trimers.

Its subcellular location is the mitochondrion matrix. The enzyme catalyses a (3S)-3-hydroxyacyl-CoA = a (2E)-enoyl-CoA + H2O. It carries out the reaction a 4-saturated-(3S)-3-hydroxyacyl-CoA = a (3E)-enoyl-CoA + H2O. The catalysed reaction is (3S)-3-hydroxybutanoyl-CoA = (2E)-butenoyl-CoA + H2O. It catalyses the reaction 3-hydroxyisovaleryl-CoA = 3-methylbut-2-enoyl-CoA + H2O. The enzyme catalyses 3-hydroxypropanoyl-CoA = acryloyl-CoA + H2O. It carries out the reaction 3-hydroxybutanoyl-CoA = (2E)-butenoyl-CoA + H2O. The protein operates within lipid metabolism; fatty acid beta-oxidation. Functionally, straight-chain enoyl-CoA thioesters from C4 up to at least C16 are processed, although with decreasing catalytic rate. This is Probable enoyl-CoA hydratase, mitochondrial (echs1) from Dictyostelium discoideum (Social amoeba).